Reading from the N-terminus, the 353-residue chain is MFVGSFTDKKPGTGIHVFDFNTKSGEAQLLSEVDSIINSSFLKLSPNGKYLYSVIESQLQTHGKIAAFKIDSNAGDLKLINMQDCGGRNPAHIEIDKSGKFLAVSNYTDPSLSFFEVDETGKIKKIDEFFTFTGSGIVKGNQDTAHIHSSNFSLENDYLFLQDLGSDCIHKFKVNLDANQNMSLQKADAIKVKPGSGPRHFVFHQNGKYGYGINELSGKVSAYALLNGNLKFLADYNAYSKKQDSYRSADIHISPDGKFLYASNRGPNEDSIVIFSINKSNGALKLIGHEPTYGEHPRNFAIDPSGQFLLVANQFSNNIVIFRRDVETGKLQKLPQELVVNGSSSLQMFTYSH.

The protein belongs to the cycloisomerase 2 family.

The protein localises to the cytoplasm. It catalyses the reaction 6-phospho-D-glucono-1,5-lactone + H2O = 6-phospho-D-gluconate + H(+). It participates in carbohydrate degradation; pentose phosphate pathway; D-ribulose 5-phosphate from D-glucose 6-phosphate (oxidative stage): step 2/3. Functionally, carboxylic ester hydrolase that may be involved in ulvan degradation. Ulvan is the main polysaccharide component of the Ulvales (green seaweed) cell wall. It is composed of disaccharide building blocks comprising 3-sulfated rhamnose (Rha3S) linked to D-glucuronic acid (GlcA), L-iduronic acid (IduA), or D-xylose (Xyl). Catalyzes the hydrolysis of 6-phosphogluconolactone to 6-phosphogluconate. The protein is 6-phosphogluconolactonase (pgl) of Formosa agariphila (strain DSM 15362 / KCTC 12365 / LMG 23005 / KMM 3901 / M-2Alg 35-1).